Here is a 490-residue protein sequence, read N- to C-terminus: Argininosuccinate lyase (490 aa).

Disordered stretches follow at residues 426 to 452 and 469 to 490; these read DPES…LSAA and ALAT…TAPE. Residues 440 to 452 are compositionally biased toward low complexity; the sequence is PAPESMAAALSAA. The segment covering 469 to 480 has biased composition (basic and acidic residues); it reads ALATAADERERV.

Belongs to the lyase 1 family. Argininosuccinate lyase subfamily.

It localises to the cytoplasm. It catalyses the reaction 2-(N(omega)-L-arginino)succinate = fumarate + L-arginine. It functions in the pathway amino-acid biosynthesis; L-arginine biosynthesis; L-arginine from L-ornithine and carbamoyl phosphate: step 3/3. The sequence is that of Argininosuccinate lyase from Natronomonas pharaonis (strain ATCC 35678 / DSM 2160 / CIP 103997 / JCM 8858 / NBRC 14720 / NCIMB 2260 / Gabara) (Halobacterium pharaonis).